Here is a 205-residue protein sequence, read N- to C-terminus: Small ribosomal subunit protein uS4 (205 aa).

The tract at residues 18-46 is disordered; that stretch reads NIWGRPKSPVNRREYGPGQHGQRRKGKLS. In terms of domain architecture, S4 RNA-binding spans 94 to 157; sequence RRLDTVVYRS…KQLAIVLEAN (64 aa).

Belongs to the universal ribosomal protein uS4 family. As to quaternary structure, part of the 30S ribosomal subunit. Contacts protein S5. The interaction surface between S4 and S5 is involved in control of translational fidelity.

In terms of biological role, one of the primary rRNA binding proteins, it binds directly to 16S rRNA where it nucleates assembly of the body of the 30S subunit. Its function is as follows. With S5 and S12 plays an important role in translational accuracy. The protein is Small ribosomal subunit protein uS4 of Rhodopseudomonas palustris (strain BisB5).